The primary structure comprises 662 residues: Transketolase (662 aa).

A substrate-binding site is contributed by histidine 28. Residues histidine 68 and 115-117 (GPL) contribute to the thiamine diphosphate site. Aspartate 156 is a binding site for Mg(2+). Glycine 157 and asparagine 186 together coordinate thiamine diphosphate. Residues asparagine 186 and isoleucine 188 each coordinate Mg(2+). Positions 261, 356, and 383 each coordinate substrate. A thiamine diphosphate-binding site is contributed by histidine 261. Glutamate 410 acts as the Proton donor in catalysis. Residue phenylalanine 436 coordinates thiamine diphosphate. Substrate is bound by residues histidine 460, aspartate 468, and arginine 519.

The protein belongs to the transketolase family. As to quaternary structure, homodimer. The cofactor is Mg(2+). It depends on Ca(2+) as a cofactor. Requires Mn(2+) as cofactor. Co(2+) serves as cofactor. Thiamine diphosphate is required as a cofactor.

It carries out the reaction D-sedoheptulose 7-phosphate + D-glyceraldehyde 3-phosphate = aldehydo-D-ribose 5-phosphate + D-xylulose 5-phosphate. Its pathway is carbohydrate biosynthesis; Calvin cycle. The protein operates within carbohydrate degradation; pentose phosphate pathway. Catalyzes the transfer of a two-carbon ketol group from a ketose donor to an aldose acceptor, via a covalent intermediate with the cofactor thiamine pyrophosphate. In Staphylococcus aureus (strain COL), this protein is Transketolase (tkt).